Reading from the N-terminus, the 314-residue chain is Aspartate carbamoyltransferase catalytic subunit (314 aa).

Carbamoyl phosphate-binding residues include arginine 58 and threonine 59. Lysine 86 provides a ligand contact to L-aspartate. The carbamoyl phosphate site is built by arginine 108, histidine 136, and glutamine 139. L-aspartate-binding residues include arginine 169 and arginine 223. Carbamoyl phosphate-binding residues include glycine 264 and proline 265.

This sequence belongs to the aspartate/ornithine carbamoyltransferase superfamily. ATCase family. Heterododecamer (2C3:3R2) of six catalytic PyrB chains organized as two trimers (C3), and six regulatory PyrI chains organized as three dimers (R2).

The catalysed reaction is carbamoyl phosphate + L-aspartate = N-carbamoyl-L-aspartate + phosphate + H(+). The protein operates within pyrimidine metabolism; UMP biosynthesis via de novo pathway; (S)-dihydroorotate from bicarbonate: step 2/3. In terms of biological role, catalyzes the condensation of carbamoyl phosphate and aspartate to form carbamoyl aspartate and inorganic phosphate, the committed step in the de novo pyrimidine nucleotide biosynthesis pathway. The polypeptide is Aspartate carbamoyltransferase catalytic subunit (Roseobacter denitrificans (strain ATCC 33942 / OCh 114) (Erythrobacter sp. (strain OCh 114))).